A 90-amino-acid chain; its full sequence is Long neurotoxin OH-34 (90 aa).

Residues 1–20 (KTLLLTLVVVTILCLDLGYT) form the signal peptide. 5 cysteine pairs are disulfide-bonded: C23–C41, C34–C62, C47–C51, C66–C77, and C78–C83.

This sequence belongs to the three-finger toxin family. Long-chain subfamily. Type II alpha-neurotoxin sub-subfamily. Expressed by the venom gland.

The protein localises to the secreted. Functionally, binds with high affinity to muscular (alpha-1/CHRNA1) and neuronal (alpha-7/CHRNA7) nicotinic acetylcholine receptor (nAChR) and inhibits acetylcholine from binding to the receptor, thereby impairing neuromuscular and neuronal transmission. The protein is Long neurotoxin OH-34 of Ophiophagus hannah (King cobra).